Consider the following 88-residue polypeptide: Cell division topological specificity factor (88 aa).

Belongs to the MinE family.

Functionally, prevents the cell division inhibition by proteins MinC and MinD at internal division sites while permitting inhibition at polar sites. This ensures cell division at the proper site by restricting the formation of a division septum at the midpoint of the long axis of the cell. This Clostridium kluyveri (strain ATCC 8527 / DSM 555 / NBRC 12016 / NCIMB 10680 / K1) protein is Cell division topological specificity factor.